A 92-amino-acid polypeptide reads, in one-letter code: C-C motif chemokine 4 (92 aa).

The N-terminal stretch at 1–23 (MKLCVTVLSLLVLAAAFCSPALS) is a signal peptide. Intrachain disulfides connect Cys-34–Cys-58 and Cys-35–Cys-74.

The protein belongs to the intercrine beta (chemokine CC) family. In terms of assembly, homodimer. Interacts with CCR5. In terms of tissue distribution, detected in peripheral blood mononuclear cells and lymph nodes.

Its subcellular location is the secreted. Its function is as follows. Monokine with inflammatory and chemokinetic properties. The protein is C-C motif chemokine 4 (CCL4) of Macaca mulatta (Rhesus macaque).